Consider the following 255-residue polypeptide: Methionine aminopeptidase (255 aa).

His-76 is a substrate binding site. Residues Asp-93, Asp-104, and His-167 each coordinate a divalent metal cation. Residue His-174 participates in substrate binding. A divalent metal cation-binding residues include Glu-201 and Glu-232.

This sequence belongs to the peptidase M24A family. Methionine aminopeptidase type 1 subfamily. Monomer. Co(2+) is required as a cofactor. Requires Zn(2+) as cofactor. Mn(2+) serves as cofactor. The cofactor is Fe(2+).

It carries out the reaction Release of N-terminal amino acids, preferentially methionine, from peptides and arylamides.. Removes the N-terminal methionine from nascent proteins. The N-terminal methionine is often cleaved when the second residue in the primary sequence is small and uncharged (Met-Ala-, Cys, Gly, Pro, Ser, Thr, or Val). Requires deformylation of the N(alpha)-formylated initiator methionine before it can be hydrolyzed. The sequence is that of Methionine aminopeptidase from Treponema pallidum (strain Nichols).